The primary structure comprises 833 residues: Leucine--tRNA ligase (833 aa).

The short motif at 41 to 52 (PYPSGAGLHVGH) is the 'HIGH' region element. Positions 610-614 (KMSKS) match the 'KMSKS' region motif. Lys613 is an ATP binding site.

This sequence belongs to the class-I aminoacyl-tRNA synthetase family.

It is found in the cytoplasm. The catalysed reaction is tRNA(Leu) + L-leucine + ATP = L-leucyl-tRNA(Leu) + AMP + diphosphate. The polypeptide is Leucine--tRNA ligase (Streptococcus pneumoniae (strain 70585)).